We begin with the raw amino-acid sequence, 427 residues long: D-inositol 3-phosphate glycosyltransferase 2 (427 aa).

1D-myo-inositol 3-phosphate is bound at residue histidine 14. Residues glutamine 20 to proline 21 and glycine 28 each bind UDP-N-acetyl-alpha-D-glucosamine. Residues aspartate 25 to asparagine 30, lysine 83, tyrosine 116, threonine 140, and arginine 160 each bind 1D-myo-inositol 3-phosphate. Residues arginine 234, lysine 239, and valine 300 each coordinate UDP-N-acetyl-alpha-D-glucosamine. Residues tyrosine 309, arginine 310, and alanine 312 each contribute to the Mg(2+) site. 2 residues coordinate UDP-N-acetyl-alpha-D-glucosamine: glutamate 322 and glutamate 330. A Mg(2+)-binding site is contributed by threonine 336.

Belongs to the glycosyltransferase group 1 family. MshA subfamily. In terms of assembly, homodimer.

It catalyses the reaction 1D-myo-inositol 3-phosphate + UDP-N-acetyl-alpha-D-glucosamine = 1D-myo-inositol 2-acetamido-2-deoxy-alpha-D-glucopyranoside 3-phosphate + UDP + H(+). Its function is as follows. Catalyzes the transfer of a N-acetyl-glucosamine moiety to 1D-myo-inositol 3-phosphate to produce 1D-myo-inositol 2-acetamido-2-deoxy-glucopyranoside 3-phosphate in the mycothiol biosynthesis pathway. The chain is D-inositol 3-phosphate glycosyltransferase 2 from Catenulispora acidiphila (strain DSM 44928 / JCM 14897 / NBRC 102108 / NRRL B-24433 / ID139908).